Here is an 809-residue protein sequence, read N- to C-terminus: Hydrazine synthase subunit alpha (809 aa).

The first 27 residues, 1–27 (MGKRKLGVIASAFVAGALVCGSTLVNA), serve as a signal peptide directing secretion. C303 is a Zn(2+) binding site. The heme site is built by C583 and C586. H587 is a binding site for Zn(2+). The heme site is built by Y591, C685, C688, H689, and H772. Residues 633 to 792 (KGVKHGEDVV…AIVEWIDLGA (160 aa)) form the Cytochrome c domain.

In terms of assembly, part of the hydrazine synthase complex that forms an elongated dimer of heterotrimers composed of one alpha, one beta and one gamma subunit. The cofactor is heme c.

It is found in the anammoxosome. The enzyme catalyses hydrazine + 3 Fe(III)-[cytochrome c] + H2O = nitric oxide + 3 Fe(II)-[cytochrome c] + NH4(+) + 2 H(+). The protein operates within nitrogen metabolism. Component of the hydrazine synthase complex that catalyzes the condensation of nitric oxide (NO) with ammonium to form hydrazine. The alpha subunit catalyzes the second half-reaction, i.e. the condensation of hydroxylamine formed in the active site of the gamma subunit with ammonia, yielding hydrazine. Is involved in anaerobic ammonium oxidation (anammox), a biological process in which nitrite is used as the electron acceptor in the conversion of ammonium to dinitrogen gas (N2) and water; this bacterial process has a major role in the Earth's nitrogen cycle and has been estimated to synthesize up to 50% of the dinitrogen gas emitted into our atmosphere from the oceans. This Kuenenia stuttgartiensis protein is Hydrazine synthase subunit alpha.